Consider the following 514-residue polypeptide: Cytochrome P450 monooxygenase ptmQ (514 aa).

Residues 3-23 (YVAQSPWIATLIVTATTYCTL) form a helical membrane-spanning segment. N-linked (GlcNAc...) asparagine glycosylation is present at Asn-148. Cys-452 is a binding site for heme. N-linked (GlcNAc...) asparagine glycosylation is present at Asn-486.

Belongs to the cytochrome P450 family. Heme serves as cofactor.

It localises to the membrane. It functions in the pathway secondary metabolite biosynthesis. Its function is as follows. Cytochrome P450 monooxygenase; part of the gene cluster that mediates the biosynthesis of the indole diterpenes penitrems. The geranylgeranyl diphosphate (GGPP) synthase ptmG catalyzes the first step in penitrem biosynthesis via conversion of farnesyl pyrophosphate and isopentyl pyrophosphate into geranylgeranyl pyrophosphate (GGPP). Condensation of indole-3-glycerol phosphate with GGPP by the prenyl transferase ptmC then forms 3-geranylgeranylindole (3-GGI). Epoxidation by the FAD-dependent monooxygenase ptmM leads to a epoxidized-GGI that is substrate of the terpene cyclase ptmB for cyclization to yield paspaline. Paspaline is subsequently converted to 13-desoxypaxilline by the cytochrome P450 monooxygenase ptmP, the latter being then converted to paxilline by the cytochrome P450 monooxygenase ptmQ. Paxilline is converted to beta-paxitriol via C-10 ketoreduction by the short-chain dehydrogenase ptmH which can be monoprenylated at the C-20 by the indole diterpene prenyltransferase ptmD. A two-step elimination (acetylation and elimination) process performed by the O-acetyltransferase ptmV and ptmI leads to the production of the prenylated form of penijanthine. The FAD-linked oxidoreductase ptmO then converts the prenylated form of penijanthine into PC-M5 which is in turn transformed into PC-M4 by the aromatic dimethylallyltransferase ptmE. Five sequential oxidative transformations performed by the cytochrome P450 monooxygenases ptmK, ptmU, ptmL, ptmN and ptmJ yield the various penitrem compounds. PtmK, ptmU and ptmM are involved in the formation of the key bicyclic ring of penitrem C via the formation of the intermediates secopenitrem D and penitrem D. PtmL catalyzes the epoxidation of penitrem D and C to yield penitrem B and F, respectively. PtmJ catalyzes the last benzylic hydroxylation to convert penitrem B to prenitrem E and penitrem F to penitrem A. This chain is Cytochrome P450 monooxygenase ptmQ, found in Penicillium ochrochloron.